The following is a 156-amino-acid chain: UPF0225 protein PFLU_1319 (156 aa).

This sequence belongs to the UPF0225 family.

This chain is UPF0225 protein PFLU_1319, found in Pseudomonas fluorescens (strain SBW25).